A 288-amino-acid polypeptide reads, in one-letter code: 33 kDa chaperonin (288 aa).

2 cysteine pairs are disulfide-bonded: Cys-235/Cys-237 and Cys-268/Cys-271.

The protein belongs to the HSP33 family. Post-translationally, under oxidizing conditions two disulfide bonds are formed involving the reactive cysteines. Under reducing conditions zinc is bound to the reactive cysteines and the protein is inactive.

The protein localises to the cytoplasm. Its function is as follows. Redox regulated molecular chaperone. Protects both thermally unfolding and oxidatively damaged proteins from irreversible aggregation. Plays an important role in the bacterial defense system toward oxidative stress. The polypeptide is 33 kDa chaperonin (Streptococcus thermophilus (strain CNRZ 1066)).